Reading from the N-terminus, the 51-residue chain is uncharacterized protein (51 aa).

This is an uncharacterized protein from Saccharomyces cerevisiae (strain ATCC 204508 / S288c) (Baker's yeast).